Consider the following 204-residue polypeptide: Ras-related protein RabL (204 aa).

14 to 21 (GDSNVGKT) is a binding site for GTP. The short motif at 36–44 (RPPSIGPDY) is the Effector region element. GTP contacts are provided by residues 62-66 (DTCGQ) and 120-123 (TKSD). Residues C203 and C204 are each lipidated (S-geranylgeranyl cysteine).

Belongs to the small GTPase superfamily. Rab family.

It localises to the cell membrane. The chain is Ras-related protein RabL (rabL) from Dictyostelium discoideum (Social amoeba).